A 455-amino-acid polypeptide reads, in one-letter code: Secreted triacylglycerol lipase LIP4 (455 aa).

A signal peptide spans 1-19 (MKLNLFILGLLTLAAHAYA). An N-linked (GlcNAc...) asparagine glycan is attached at Asn98. A disulfide bond links Cys115 and Cys284. The active-site Nucleophile is Ser197. An N-linked (GlcNAc...) asparagine glycan is attached at Asn230. Active-site residues include Asp344 and His378. Cysteines 360 and 406 form a disulfide.

This sequence belongs to the AB hydrolase superfamily. Lipase family. Class Lip subfamily.

The protein resides in the secreted. The protein localises to the cell wall. It carries out the reaction a triacylglycerol + H2O = a diacylglycerol + a fatty acid + H(+). The enzyme catalyses a monoacylglycerol + H2O = glycerol + a fatty acid + H(+). The catalysed reaction is a diacylglycerol + H2O = a monoacylglycerol + a fatty acid + H(+). Secreted lipase involved in Dandruff and seborrheic dermatitis (D/SD) probably via lipase-mediated breakdown of sebaceous lipids and release of irritating free fatty acids. Has triacylglycerol lipase activity and is able to hydrolyze triolein. Mostly converts monoolein to di- and triolein, while free fatty acids are only produced in low amounts. This chain is Secreted triacylglycerol lipase LIP4, found in Malassezia globosa (strain ATCC MYA-4612 / CBS 7966) (Dandruff-associated fungus).